Reading from the N-terminus, the 272-residue chain is HMP-PP phosphatase (272 aa).

Asp-8 functions as the Nucleophile in the catalytic mechanism. Residues Asp-8, Asp-10, and Asp-212 each contribute to the Mg(2+) site.

This sequence belongs to the HAD-like hydrolase superfamily. Cof family. Mg(2+) serves as cofactor.

It carries out the reaction 4-amino-2-methyl-5-(diphosphooxymethyl)pyrimidine + H2O = 4-amino-2-methyl-5-(phosphooxymethyl)pyrimidine + phosphate + H(+). In terms of biological role, catalyzes the hydrolysis of 4-amino-2-methyl-5-hydroxymethylpyrimidine pyrophosphate (HMP-PP) to 4-amino-2-methyl-5-hydroxymethylpyrimidine phosphate (HMP-P). This is HMP-PP phosphatase from Escherichia coli O6:H1 (strain CFT073 / ATCC 700928 / UPEC).